The following is a 166-amino-acid chain: Small ribosomal subunit protein uS5 (166 aa).

The region spanning 11-74 (LIEKLITVNR…EKARRNMVTV (64 aa)) is the S5 DRBM domain.

Belongs to the universal ribosomal protein uS5 family. Part of the 30S ribosomal subunit. Contacts proteins S4 and S8.

Functionally, with S4 and S12 plays an important role in translational accuracy. Located at the back of the 30S subunit body where it stabilizes the conformation of the head with respect to the body. The protein is Small ribosomal subunit protein uS5 of Idiomarina loihiensis (strain ATCC BAA-735 / DSM 15497 / L2-TR).